A 152-amino-acid chain; its full sequence is Putative RRN3-like protein RRN3P1 (152 aa).

This sequence belongs to the RRN3 family.

The protein is Putative RRN3-like protein RRN3P1 (RRN3P1) of Homo sapiens (Human).